The sequence spans 180 residues: Large ribosomal subunit protein uL5 (180 aa).

Belongs to the universal ribosomal protein uL5 family. In terms of assembly, part of the 50S ribosomal subunit; part of the 5S rRNA/L5/L18/L25 subcomplex. Contacts the 5S rRNA and the P site tRNA. Forms a bridge to the 30S subunit in the 70S ribosome.

In terms of biological role, this is one of the proteins that bind and probably mediate the attachment of the 5S RNA into the large ribosomal subunit, where it forms part of the central protuberance. In the 70S ribosome it contacts protein S13 of the 30S subunit (bridge B1b), connecting the 2 subunits; this bridge is implicated in subunit movement. Contacts the P site tRNA; the 5S rRNA and some of its associated proteins might help stabilize positioning of ribosome-bound tRNAs. The protein is Large ribosomal subunit protein uL5 of Mycoplasma pneumoniae (strain ATCC 29342 / M129 / Subtype 1) (Mycoplasmoides pneumoniae).